The chain runs to 703 residues: Elongation factor G (703 aa).

The tr-type G domain maps to 7–287 (KFTRNIGIAA…AVMRYLPSPA (281 aa)). GTP is bound by residues 16-23 (AHIDAGKT), 84-88 (DTPGH), and 138-141 (NKMD).

Belongs to the TRAFAC class translation factor GTPase superfamily. Classic translation factor GTPase family. EF-G/EF-2 subfamily.

It is found in the cytoplasm. Catalyzes the GTP-dependent ribosomal translocation step during translation elongation. During this step, the ribosome changes from the pre-translocational (PRE) to the post-translocational (POST) state as the newly formed A-site-bound peptidyl-tRNA and P-site-bound deacylated tRNA move to the P and E sites, respectively. Catalyzes the coordinated movement of the two tRNA molecules, the mRNA and conformational changes in the ribosome. The chain is Elongation factor G from Christiangramia forsetii (strain DSM 17595 / CGMCC 1.15422 / KT0803) (Gramella forsetii).